Consider the following 375-residue polypeptide: Ketohexokinase (375 aa).

D319 is a beta-D-fructose binding site.

It belongs to the carbohydrate kinase PfkB family. In terms of assembly, homodimer.

The enzyme catalyses beta-D-fructose + ATP = beta-D-fructose 1-phosphate + ADP + H(+). It functions in the pathway carbohydrate metabolism; fructose metabolism. Activated in the presence of 0.5 M KCl. 85% activity at 3.5 M KCl. 60% activity without KCl. In terms of biological role, catalyzes the ATP-dependent phosphorylation of the ketose sugar fructose to fructose-1-phosphate. Does not produce fructose-6-phosphate. The sugars D-glucose, D-galactose, L-rhamnose, D-xylose, L-arabinose and D-ribose are not substrates of this enzyme. The polypeptide is Ketohexokinase (Haloferax volcanii (strain ATCC 29605 / DSM 3757 / JCM 8879 / NBRC 14742 / NCIMB 2012 / VKM B-1768 / DS2) (Halobacterium volcanii)).